Reading from the N-terminus, the 20-residue chain is Antifungal protein (20 aa).

It belongs to the protease inhibitor I3 (leguminous Kunitz-type inhibitor) family.

Functionally, inhibits soybean trypsin. Has antifungal activity against R.cerealis, A.brassicae and A.niger, and weak antifungal activity against F.oxysporum. The protein is Antifungal protein of Cullen corylifolium (Malaysian scurfpea).